The sequence spans 250 residues: Probable aquaporin TIP-type RB7-5A (250 aa).

The next 2 helical transmembrane spans lie at 20–42 and 55–77; these read AYVAEFIATLLFVFAGVGSAIAY and GLVAVAVAHAFALFVGVSIAANI. Residues 83 to 85 carry the NPA 1 motif; sequence NPA. The next 3 helical transmembrane spans lie at 97–119, 140–162, and 172–194; these read TILTGFFYWIAQLLGSTVACLLL, LQGVVMEIIITFALVYTVYATAA, and IAPIAIGFIVGANILAAGPFSGG. Positions 197–199 match the NPA 2 motif; sequence NPA. Residues 215–237 form a helical membrane-spanning segment; that stretch reads WIYWAGPLIGGGLAGFIYGDVFI.

Belongs to the MIP/aquaporin (TC 1.A.8) family. TIP (TC 1.A.8.10) subfamily. As to expression, roots.

It is found in the vacuole membrane. In terms of biological role, channel protein in tonoplast. These proteins may allow the diffusion of amino acids and/or peptides from the vacuolar compartment to the cytoplasm. This is Probable aquaporin TIP-type RB7-5A from Nicotiana tabacum (Common tobacco).